A 1232-amino-acid chain; its full sequence is DNA-directed RNA polymerase subunit beta (1232 aa).

A disordered region spans residues 1170–1232 (SVDEDADELE…LDLDDFGDEH (63 aa)). Acidic residues predominate over residues 1171 to 1180 (VDEDADELEV). Residues 1189–1198 (PEEKEEKEKE) show a composition bias toward basic and acidic residues. Over residues 1199-1232 (DSDEYDDLREEDVEPDLEELSLDDLDLDDFGDEH) the composition is skewed to acidic residues.

Belongs to the RNA polymerase beta chain family. As to quaternary structure, the RNAP catalytic core consists of 2 alpha, 1 beta, 1 beta' and 1 omega subunit. When a sigma factor is associated with the core the holoenzyme is formed, which can initiate transcription.

The enzyme catalyses RNA(n) + a ribonucleoside 5'-triphosphate = RNA(n+1) + diphosphate. Functionally, DNA-dependent RNA polymerase catalyzes the transcription of DNA into RNA using the four ribonucleoside triphosphates as substrates. The chain is DNA-directed RNA polymerase subunit beta from Clostridium botulinum (strain Okra / Type B1).